The following is a 313-amino-acid chain: Porphobilinogen deaminase (313 aa).

Cysteine 242 carries the S-(dipyrrolylmethanemethyl)cysteine modification.

The protein belongs to the HMBS family. As to quaternary structure, monomer. It depends on dipyrromethane as a cofactor.

The enzyme catalyses 4 porphobilinogen + H2O = hydroxymethylbilane + 4 NH4(+). The protein operates within porphyrin-containing compound metabolism; protoporphyrin-IX biosynthesis; coproporphyrinogen-III from 5-aminolevulinate: step 2/4. Its function is as follows. Tetrapolymerization of the monopyrrole PBG into the hydroxymethylbilane pre-uroporphyrinogen in several discrete steps. This is Porphobilinogen deaminase from Yersinia pseudotuberculosis serotype O:3 (strain YPIII).